We begin with the raw amino-acid sequence, 471 residues long: A-type ATP synthase subunit B (471 aa).

It belongs to the ATPase alpha/beta chains family. As to quaternary structure, has multiple subunits with at least A(3), B(3), C, D, E, F, H, I and proteolipid K(x).

Its subcellular location is the cell membrane. Component of the A-type ATP synthase that produces ATP from ADP in the presence of a proton gradient across the membrane. The B chain is a regulatory subunit. This Natronomonas pharaonis (strain ATCC 35678 / DSM 2160 / CIP 103997 / JCM 8858 / NBRC 14720 / NCIMB 2260 / Gabara) (Halobacterium pharaonis) protein is A-type ATP synthase subunit B.